We begin with the raw amino-acid sequence, 477 residues long: Chromosomal replication initiator protein DnaA (477 aa).

A domain I, interacts with DnaA modulators region spans residues 1–87 (MSDRSDPTHA…AGVSNFAIVV (87 aa)). Residues 87 to 132 (VNPEIAQDAFAQHPEPAAEQPYIETPTITAPTDNPGLPASPSRGDS) form a domain II region. The interval 112–131 (PTITAPTDNPGLPASPSRGD) is disordered. A domain III, AAA+ region region spans residues 133-349 (RLNPKYGFDT…GTLIRVTAFA (217 aa)). ATP contacts are provided by Gly-177, Gly-179, Lys-180, and Thr-181. Residues 350–477 (SLNKTPVDLA…IKQNHRYGKM (128 aa)) form a domain IV, binds dsDNA region.

This sequence belongs to the DnaA family. Oligomerizes as a right-handed, spiral filament on DNA at oriC.

The protein localises to the cytoplasm. Functionally, plays an essential role in the initiation and regulation of chromosomal replication. ATP-DnaA binds to the origin of replication (oriC) to initiate formation of the DNA replication initiation complex once per cell cycle. Binds the DnaA box (a 9 base pair repeat at the origin) and separates the double-stranded (ds)DNA. Forms a right-handed helical filament on oriC DNA; dsDNA binds to the exterior of the filament while single-stranded (ss)DNA is stabiized in the filament's interior. The ATP-DnaA-oriC complex binds and stabilizes one strand of the AT-rich DNA unwinding element (DUE), permitting loading of DNA polymerase. After initiation quickly degrades to an ADP-DnaA complex that is not apt for DNA replication. Binds acidic phospholipids. The polypeptide is Chromosomal replication initiator protein DnaA (Clavibacter michiganensis subsp. michiganensis (strain NCPPB 382)).